Here is a 436-residue protein sequence, read N- to C-terminus: Adenylosuccinate synthetase (436 aa).

GTP is bound by residues 22–28 (GDEGKGK) and 50–52 (GHE). Aspartate 23 serves as the catalytic Proton acceptor. Aspartate 23 and glycine 50 together coordinate Mg(2+). IMP is bound by residues 23–26 (DEGK), 48–51 (NAGH), threonine 141, arginine 155, asparagine 231, threonine 246, and arginine 310. Histidine 51 serves as the catalytic Proton donor. A substrate-binding site is contributed by 306–312 (VSTARVR). GTP is bound by residues arginine 312, 338 to 340 (KMD), and 424 to 426 (GVG).

It belongs to the adenylosuccinate synthetase family. In terms of assembly, homodimer. It depends on Mg(2+) as a cofactor.

It localises to the cytoplasm. The catalysed reaction is IMP + L-aspartate + GTP = N(6)-(1,2-dicarboxyethyl)-AMP + GDP + phosphate + 2 H(+). Its pathway is purine metabolism; AMP biosynthesis via de novo pathway; AMP from IMP: step 1/2. Plays an important role in the salvage pathway for purine nucleotide biosynthesis. Catalyzes the first committed step in the biosynthesis of AMP from IMP. The sequence is that of Adenylosuccinate synthetase from Babesia bovis.